We begin with the raw amino-acid sequence, 188 residues long: Ribosomal RNA small subunit methyltransferase G (188 aa).

S-adenosyl-L-methionine contacts are provided by residues glycine 69, phenylalanine 74, 119–120 (VQ), and arginine 134.

This sequence belongs to the methyltransferase superfamily. RNA methyltransferase RsmG family.

Its subcellular location is the cytoplasm. The catalysed reaction is guanosine(527) in 16S rRNA + S-adenosyl-L-methionine = N(7)-methylguanosine(527) in 16S rRNA + S-adenosyl-L-homocysteine. Functionally, specifically methylates the N7 position of guanine in position 527 of 16S rRNA. The polypeptide is Ribosomal RNA small subunit methyltransferase G (Campylobacter jejuni subsp. jejuni serotype O:2 (strain ATCC 700819 / NCTC 11168)).